The chain runs to 194 residues: Imidazoleglycerol-phosphate dehydratase (194 aa).

It belongs to the imidazoleglycerol-phosphate dehydratase family.

The protein resides in the cytoplasm. The catalysed reaction is D-erythro-1-(imidazol-4-yl)glycerol 3-phosphate = 3-(imidazol-4-yl)-2-oxopropyl phosphate + H2O. It participates in amino-acid biosynthesis; L-histidine biosynthesis; L-histidine from 5-phospho-alpha-D-ribose 1-diphosphate: step 6/9. The protein is Imidazoleglycerol-phosphate dehydratase of Thermus thermophilus (strain ATCC BAA-163 / DSM 7039 / HB27).